The sequence spans 2309 residues: Collagen alpha-4(VI) chain (2309 aa).

Residues Met-1–Ser-22 form the signal peptide. The interval Lys-21 to Tyr-1410 is nonhelical region. 6 VWFA domains span residues Asp-34–Leu-206, Asp-235–Leu-413, Asp-430–Val-653, Asp-634–Leu-811, Asp-849–Ile-1018, and Asp-1030–Ile-1199. A glycan (N-linked (GlcNAc...) asparagine) is linked at Asn-188. Asn-754 is a glycosylation site (N-linked (GlcNAc...) asparagine). Residue Asn-1114 is glycosylated (N-linked (GlcNAc...) asparagine). The triple-helical region stretch occupies residues Gly-1411–Gly-1744. Over residues Gly-1414–Leu-1430 the composition is skewed to basic and acidic residues. Residues Gly-1414–Ala-1746 form a disordered region. The segment covering Gly-1480–Gly-1489 has biased composition (gly residues). Residues Arg-1527 to Asp-1529 carry the Cell attachment site motif. Low complexity-rich tracts occupy residues Pro-1605–Pro-1621 and Pro-1650–Phe-1669. The nonhelical region stretch occupies residues Leu-1745 to Lys-2309. VWFA domains follow at residues Glu-1776–Thr-1957 and Asp-1982–Leu-2187. The Cell attachment site signature appears at Arg-2208 to Asp-2210. The segment at Ala-2262–Glu-2300 is disordered.

It belongs to the type VI collagen family. As to quaternary structure, trimers composed of three different chains: alpha-1(VI), alpha-2(VI), and alpha-3(VI) or alpha-4(VI) or alpha-5(VI) or alpha-6(VI). Post-translationally, prolines at the third position of the tripeptide repeating unit (G-X-Y) are hydroxylated in some or all of the chains. As to expression, in newborn, it is expressed in lung, kidney, brain, intestine, skin, sternum and, at weak level, calvaria. In adult, it is almost absent with some weak expression in ovary and very weak expression in spleen, lung, uterus and brain.

The protein localises to the secreted. The protein resides in the extracellular space. Its subcellular location is the extracellular matrix. Functionally, collagen VI acts as a cell-binding protein. The sequence is that of Collagen alpha-4(VI) chain (Col6a4) from Mus musculus (Mouse).